The following is an 81-amino-acid chain: Elongation factor 1-beta (81 aa).

It belongs to the EF-1-beta/EF-1-delta family.

Its function is as follows. Promotes the exchange of GDP for GTP in EF-1-alpha/GDP, thus allowing the regeneration of EF-1-alpha/GTP that could then be used to form the ternary complex EF-1-alpha/GTP/AAtRNA. The protein is Elongation factor 1-beta of Nanoarchaeum equitans (strain Kin4-M).